The following is a 1001-amino-acid chain: Integrator complex subunit 7 (1001 aa).

A disordered region spans residues 980–1001 (DPSKQGAPAPSTSQAVGQTRRF). The segment covering 989–1001 (PSTSQAVGQTRRF) has biased composition (polar residues).

It belongs to the Integrator subunit 7 family. In terms of assembly, belongs to the multiprotein complex Integrator, at least composed of IntS1, IntS2, IntS3, IntS4, omd/IntS5, IntS6, defl/IntS7, IntS8, IntS9, IntS10, IntS11, IntS12, asun/IntS13, IntS14 and IntS15. The core complex associates with protein phosphatase 2A subunits mts/PP2A and Pp2A-29B, to form the Integrator-PP2A (INTAC) complex.

It localises to the nucleus. It is found in the cytoplasm. In terms of biological role, component of the integrator complex, a multiprotein complex that terminates RNA polymerase II (Pol II) transcription in the promoter-proximal region of genes. The integrator complex provides a quality checkpoint during transcription elongation by driving premature transcription termination of transcripts that are unfavorably configured for transcriptional elongation: the complex terminates transcription by (1) catalyzing dephosphorylation of the C-terminal domain (CTD) of Pol II subunit Polr2A/Rbp1 and Spt5, and (2) degrading the exiting nascent RNA transcript via endonuclease activity. The integrator complex is also involved in the 3'-end processing of the U7 snRNA, and also the spliceosomal snRNAs U1, U2, U4 and U5. This Drosophila melanogaster (Fruit fly) protein is Integrator complex subunit 7.